Here is a 279-residue protein sequence, read N- to C-terminus: Ribonuclease Z (279 aa).

The Zn(2+) site is built by H64, H66, D68, H69, H134, D191, and H245. D68 (proton acceptor) is an active-site residue.

This sequence belongs to the RNase Z family. Homodimer. It depends on Zn(2+) as a cofactor.

The enzyme catalyses Endonucleolytic cleavage of RNA, removing extra 3' nucleotides from tRNA precursor, generating 3' termini of tRNAs. A 3'-hydroxy group is left at the tRNA terminus and a 5'-phosphoryl group is left at the trailer molecule.. Functionally, zinc phosphodiesterase, which displays some tRNA 3'-processing endonuclease activity. Probably involved in tRNA maturation, by removing a 3'-trailer from precursor tRNA. This is Ribonuclease Z from Methanopyrus kandleri (strain AV19 / DSM 6324 / JCM 9639 / NBRC 100938).